Reading from the N-terminus, the 205-residue chain is Urease accessory protein UreE (205 aa).

Residues 171-205 are disordered; it reads AHEAHPHAHSHAGGHGHVHSGHGHGGKHGEHDAES. A compositionally biased stretch (basic residues) spans 177–196; it reads HAHSHAGGHGHVHSGHGHGG.

The protein belongs to the UreE family.

It is found in the cytoplasm. Involved in urease metallocenter assembly. Binds nickel. Probably functions as a nickel donor during metallocenter assembly. The sequence is that of Urease accessory protein UreE from Bordetella parapertussis (strain 12822 / ATCC BAA-587 / NCTC 13253).